The chain runs to 176 residues: MKVLFFTIALSLFSILHADDVAFSAFTPSEGTYYVQVIAVDKEFPEEEIPRDMSPLTIMYLDDGKMEARFTMKKDDNCEEINIMLEKTADPRKITMNRRLRYTCAAVRTSKQKHWILVCPREFQGETIRMAKLVGPNTDKNPKALEDFYRFIYRERFDKRRIITPKQTEACAPEHA.

The signal sequence occupies residues Met1–Ala18. Cys78 and Cys171 form a disulfide bridge.

The protein belongs to the calycin superfamily. Lipocalin family. In terms of tissue distribution, mammary gland. Secreted in milk.

It localises to the secreted. In terms of biological role, probably serves a role in the transport of a small ligand released during the hydrolysis of milk fat. This is Late lactation protein from Trichosurus vulpecula (Brush-tailed possum).